The primary structure comprises 734 residues: Cytoplasmic polyadenylation element-binding protein 3 (734 aa).

3 disordered regions span residues 1–31 (MDRN…RNVP), 98–185 (GSKK…AARN), and 220–283 (RGSL…LPPR). The span at 16 to 26 (PAEHPGDEKSG) shows a compositional bias: basic and acidic residues. Low complexity-rich tracts occupy residues 121–140 (SRRT…SPSR) and 232–242 (KSFSSTTTSSS). A compositionally biased stretch (basic and acidic residues) spans 243–256 (PEKEREKEKEKIEQ). Polar residues predominate over residues 259-275 (YGTTQRQSVNSQQSSAS). Residues 294-316 (IFVGGVPWDITEAALKDSFGEFG) form the RRM domain. 2 disordered regions span residues 564-593 (KAYQ…SNNS) and 630-657 (TVYD…SNSN). Positions 576–593 (LSSNSPSKARDGQNSNNS) are enriched in low complexity.

Functionally, cytoplasmic polyadenylation element binding protein that binds to and regulates the translation of specific mRNAs. The protein is Cytoplasmic polyadenylation element-binding protein 3 (cpb-3) of Caenorhabditis japonica.